The primary structure comprises 153 residues: Nucleoside diphosphate kinase (153 aa).

Ala2 is modified (N-acetylalanine). ATP is bound by residues Lys13, Phe61, Arg89, Thr95, Arg106, and Asn116. His119 (pros-phosphohistidine intermediate) is an active-site residue. The residue at position 126 (Ser126) is a Phosphoserine.

The protein belongs to the NDK family. As to quaternary structure, homohexamer. It depends on Mg(2+) as a cofactor.

It localises to the cytoplasm. The protein resides in the cytoskeleton. The catalysed reaction is a 2'-deoxyribonucleoside 5'-diphosphate + ATP = a 2'-deoxyribonucleoside 5'-triphosphate + ADP. It catalyses the reaction a ribonucleoside 5'-diphosphate + ATP = a ribonucleoside 5'-triphosphate + ADP. In terms of biological role, major role in the synthesis of nucleoside triphosphates other than ATP. The ATP gamma phosphate is transferred to the NDP beta phosphate via a ping-pong mechanism, using a phosphorylated active-site intermediate. The chain is Nucleoside diphosphate kinase (awd) from Drosophila melanogaster (Fruit fly).